The primary structure comprises 216 residues: Small ribosomal subunit protein uS3 (216 aa).

A KH type-2 domain is found at 38-108 (LREFVKKKLH…DLAIDIQEVK (71 aa)).

It belongs to the universal ribosomal protein uS3 family. Part of the 30S ribosomal subunit. Forms a tight complex with proteins S10 and S14.

In terms of biological role, binds the lower part of the 30S subunit head. Binds mRNA in the 70S ribosome, positioning it for translation. This Desulfosudis oleivorans (strain DSM 6200 / JCM 39069 / Hxd3) (Desulfococcus oleovorans) protein is Small ribosomal subunit protein uS3.